The primary structure comprises 230 residues: Large ribosomal subunit protein uL1 (230 aa).

Belongs to the universal ribosomal protein uL1 family. Part of the 50S ribosomal subunit.

Its function is as follows. Binds directly to 23S rRNA. The L1 stalk is quite mobile in the ribosome, and is involved in E site tRNA release. In terms of biological role, protein L1 is also a translational repressor protein, it controls the translation of the L11 operon by binding to its mRNA. This Leptospira borgpetersenii serovar Hardjo-bovis (strain L550) protein is Large ribosomal subunit protein uL1.